A 1068-amino-acid polypeptide reads, in one-letter code: Focal adhesion kinase 1 (1068 aa).

Residues 1-26 (MAAAYLDPNLNHNPSTNAKSRLSTGM) form a disordered region. Polar residues predominate over residues 10 to 23 (LNHNPSTNAKSRLS). The 321-residue stretch at 35 to 355 (RVLRVFHYFE…GYCRLVSGAS (321 aa)) folds into the FERM domain. Y403 and Y413 each carry phosphotyrosine. Residues 435 to 693 (IELGRCIGEG…ELKAQLSTIL (259 aa)) enclose the Protein kinase domain. ATP-binding positions include 441–447 (IGEGQFG), K467, and 513–515 (ELC). The active-site Proton acceptor is D559. A phosphotyrosine; by autocatalysis mark is found at Y589 and Y590. Residues 699–710 (QQEERMRMESRR) are compositionally biased toward basic and acidic residues. 2 disordered regions span residues 699-750 (QQEE…QHMM) and 869-912 (GNQH…DGYN). Residues Y874 and Y941 each carry the phosphotyrosine modification.

This sequence belongs to the protein kinase superfamily. Tyr protein kinase family. FAK subfamily. In terms of processing, phosphorylated on tyrosine residues; phosphorylated kinase is first detected during gastrulation, suggesting that tyrosine phosphorylation is developmentally regulated.

Its subcellular location is the cell junction. The protein localises to the focal adhesion. It is found in the cell membrane. The protein resides in the cytoplasm. It localises to the cytoskeleton. Its subcellular location is the cilium basal body. The catalysed reaction is L-tyrosyl-[protein] + ATP = O-phospho-L-tyrosyl-[protein] + ADP + H(+). In terms of biological role, non-receptor protein-tyrosine kinase implicated in signaling pathways involved in cell motility, proliferation and apoptosis. Activated by tyrosine-phosphorylation in response to either integrin clustering induced by cell adhesion or antibody cross-linking, or via G-protein coupled receptor (GPCR) occupancy by ligands such as bombesin or lysophosphatidic acid, or via LDL receptor occupancy. Microtubule-induced dephosphorylation at Tyr-397 is crucial for the induction of focal adhesion disassembly. This Xenopus laevis (African clawed frog) protein is Focal adhesion kinase 1 (ptk2).